The following is a 376-amino-acid chain: Cysteine proteinase 2 (376 aa).

An N-terminal signal peptide occupies residues 1–18; that stretch reads MRLLVFLILLIFVNFSFA. The propeptide at 19–122 is activation peptide; the sequence is NVRPNGRRFS…EVLNVEDLQT (104 aa). Intrachain disulfides connect C144/C187, C178/C221, and C279/C365. Residue C147 is part of the active site. Active-site residues include H286 and N343.

The protein belongs to the peptidase C1 family.

It is found in the lysosome. In terms of biological role, cysteine proteinases 1 and 2 are believed to participate in the breakdown of protein during differentiation of Dictyostelium as a response to starvation. The protein is Cysteine proteinase 2 (cprB) of Dictyostelium discoideum (Social amoeba).